The sequence spans 185 residues: Ribosome-recycling factor (185 aa).

The interval 140–168 is disordered; sequence KKEQKDGNITEDEQRNLEKQVQKITDDST.

This sequence belongs to the RRF family.

The protein resides in the cytoplasm. Its function is as follows. Responsible for the release of ribosomes from messenger RNA at the termination of protein biosynthesis. May increase the efficiency of translation by recycling ribosomes from one round of translation to another. The polypeptide is Ribosome-recycling factor (Lactobacillus helveticus (strain DPC 4571)).